The primary structure comprises 461 residues: Transcription factor GTE3, chloroplastic (461 aa).

A compositionally biased stretch (gly residues) spans 1–11 (MASGPIAGGGV). Residues 1 to 41 (MASGPIAGGGVSKTKHKWSDSGNKSQKRSKPTVANSNSLGL) form a disordered region. The transit peptide at 1-51 (MASGPIAGGGVSKTKHKWSDSGNKSQKRSKPTVANSNSLGLEDNHQMMKIS) directs the protein to the chloroplast. The Bromo domain occupies 114-220 (KGTVQILKSC…NLFEEKWVPL (107 aa)). The NET domain maps to 298–379 (LVEEASANRD…EYKESLSKKK (82 aa)). Positions 376 to 392 (SKKKEEQGLDSERDAES) are enriched in basic and acidic residues. The segment at 376–461 (SKKKEEQGLD…SSGHESDTGN (86 aa)) is disordered. Over residues 393–412 (FHNSVHESNTLVTGLESSKV) the composition is skewed to polar residues. Residues 429–451 (GGSSSSNSSSSGSGSGSSGSDSD) show a composition bias toward low complexity. Over residues 452 to 461 (SSGHESDTGN) the composition is skewed to basic and acidic residues.

As to quaternary structure, interacts with SIZ1 (via PHD domain). Post-translationally, sumoylated by SIZ1. Sumoylation reduces capacity to bind to acetylated histone H3.

It is found in the plastid. The protein resides in the chloroplast. Probable transcription factor that binds to acetylated histone H3. In Arabidopsis thaliana (Mouse-ear cress), this protein is Transcription factor GTE3, chloroplastic (GTE3).